Consider the following 306-residue polypeptide: Pantothenate kinase (306 aa).

91 to 98 (GSVAVGKS) contributes to the ATP binding site.

The protein belongs to the prokaryotic pantothenate kinase family.

The protein localises to the cytoplasm. The catalysed reaction is (R)-pantothenate + ATP = (R)-4'-phosphopantothenate + ADP + H(+). It functions in the pathway cofactor biosynthesis; coenzyme A biosynthesis; CoA from (R)-pantothenate: step 1/5. The polypeptide is Pantothenate kinase (Streptococcus thermophilus (strain CNRZ 1066)).